The sequence spans 69 residues: Conotoxin Eb6.21 (69 aa).

Positions 1 to 17 (VLIIAVLFLTACQLTTA) are cleaved as a signal peptide. Residues 18–41 (ETYSRGRQKHRARRSTDKNSKWTR) constitute a propeptide that is removed on maturation. 3 disulfide bridges follow: Cys43/Cys57, Cys50/Cys61, and Cys56/Cys68.

This sequence belongs to the conotoxin O1 superfamily. In terms of tissue distribution, expressed by the venom duct.

The protein localises to the secreted. This is Conotoxin Eb6.21 (E1) from Conus ebraeus (Hebrew cone).